Consider the following 1200-residue polypeptide: NACHT, LRR and PYD domains-containing protein 5 (1200 aa).

Positions 57–148 constitute a Pyrin domain; it reads SLTFSSYGLQ…SEKARDDMKR (92 aa). Over residues 142-152 the composition is skewed to basic and acidic residues; that stretch reads ARDDMKRHSPE. The disordered stretch occupies residues 142-232; it reads ARDDMKRHSP…TEEQGHGGDT (91 aa). The segment covering 173–182 has biased composition (polar residues); that stretch reads QAVQQDSATA. Composition is skewed to low complexity over residues 192–202 and 209–221; these read QAMEQEGATAA and ISQAMEQEGATAA. Residues 280–602 enclose the NACHT domain; the sequence is RTVVLHGKSG…ALYYVLEGLE (323 aa). 286–293 lines the ATP pocket; that stretch reads GKSGIGKS. LRR repeat units lie at residues 704 to 727, 730 to 753, 780 to 803, 809 to 832, 836 to 863, 865 to 892, 893 to 916, 950 to 973, 979 to 1002, 1007 to 1034, 1036 to 1059, 1064 to 1092, and 1121 to 1142; these read LNSFQEVWLPINQNLDLIASSFCL, CPYLRKIRVDVKGIFPRDESAEAC, HPHLRQLDLGSSILTERAMKTLCA, TCKIQTLMFRNAQITPGVQHLWRI, NRNLRSLNLGGTHLKEEDVRMACEALKH, KCLLESLRLDCCGLTHACYLKISQILTT, SPSLKSLSLAGNKVTDQGVMPLSD, NRSLTHLCLSNNSLGNEGVNLLCR, HCSLQRLMLNQCHLDTAGCGFLAL, NSWLTHLSLSMNPVEDNGVKLLCEVMRE, SCHLQDLELVKCHLTAACCESLSC, SRHLKSLDLTDNALGDGGVAALCEGLKQK, and NRHLTSLNLVQNNFSPKGMMKL.

The protein belongs to the NLRP family. In terms of assembly, component of the subcortical maternal complex (SCMC), at least composed of NLRP5, KHDC3, OOEP, and TLE6 isoform 1. Within the complex, interacts with OOEP, KHDC3L and TLE6. The SCMC may facilitate translocation of its components between the nuclear and cytoplasmic compartments. As part of the SCMC interacts with the SCMC-associated protein ZBED3. As part of the SCMC interacts with the SCMC-associated protein CFL1/Cofilin-1. Interacts with PRKCE. Interacts with TUBB3 at cytoskeleton microtubules. Phosphorylated by PRKCE. As to expression, expressed in cumulus cells (at protein level). Highly abundant in oocytes and early embryos, however poorly expressed in somatic tissues such as the liver and spinal cord.

Its subcellular location is the cytoplasm. The protein localises to the cytoplasmic vesicle. The protein resides in the secretory vesicle. It localises to the cortical granule. It is found in the mitochondrion. Its subcellular location is the nucleus. The protein localises to the nucleolus. The protein resides in the golgi apparatus. Its function is as follows. Component of the subcortical maternal complex (SCMC), a multiprotein complex that plays a key role in early embryonic development. The SCMC complex is a structural constituent of cytoplasmic lattices, which consist in fibrous structures found in the cytoplasm of oocytes and preimplantation embryos. They are required to store maternal proteins critical for embryonic development, such as proteins that control epigenetic reprogramming of the preimplantation embryo, and prevent their degradation or activation. Required for the localization of cortical granules to the cortex of oocytes, via association with the cortical actin scaffold. Required for cortical actin clearance prior to oocyte exocytosis and prevention of polyspermy. Involved in regulating post-fertilization Ca(2+) release and endoplasmic reticulum storage (ER) storage via regulation of cellular localization. May be involved in the localization of mitochondria to the cytoplasm and perinuclear region in oocytes and early stage embryos, independent of its role in CPL formation. The polypeptide is NACHT, LRR and PYD domains-containing protein 5 (NLRP5) (Homo sapiens (Human)).